The sequence spans 287 residues: MDLEVVVITGMSGSGKSVALHALEDAGYYCVDNLPPELLTSFVELEHAHHGHRVAVAMDVRSATALPLVPQQLAGLREQGVQVRQLFLDATNDVLVRRFSETRRRHPLSQAEMREGPRPLLHTMRLERELLAPLREQAHVIDTSTLRSSQLLSYVKDLLSVPPSRLTLVFQSFAFKRGISMDADYVFDVRMLPNPHYEPLLRALTGKDAPVIDYLRQQPEVALMLAHIGDFLDHWLDALAHNHRSYVTVAIGCTGGQHRSVYLVEQLAARFEGRWNTLRRHRELDGI.

Residue 10 to 17 (GMSGSGKS) participates in ATP binding. 59 to 62 (DVRS) is a GTP binding site.

It belongs to the RapZ-like family.

In terms of biological role, displays ATPase and GTPase activities. The polypeptide is Nucleotide-binding protein Dtpsy_0831 (Acidovorax ebreus (strain TPSY) (Diaphorobacter sp. (strain TPSY))).